A 250-amino-acid polypeptide reads, in one-letter code: 1-(5-phosphoribosyl)-5-[(5-phosphoribosylamino)methylideneamino] imidazole-4-carboxamide isomerase (250 aa).

D12 serves as the catalytic Proton acceptor. Residue D134 is the Proton donor of the active site.

This sequence belongs to the HisA/HisF family.

It localises to the cytoplasm. The catalysed reaction is 1-(5-phospho-beta-D-ribosyl)-5-[(5-phospho-beta-D-ribosylamino)methylideneamino]imidazole-4-carboxamide = 5-[(5-phospho-1-deoxy-D-ribulos-1-ylimino)methylamino]-1-(5-phospho-beta-D-ribosyl)imidazole-4-carboxamide. Its pathway is amino-acid biosynthesis; L-histidine biosynthesis; L-histidine from 5-phospho-alpha-D-ribose 1-diphosphate: step 4/9. The sequence is that of 1-(5-phosphoribosyl)-5-[(5-phosphoribosylamino)methylideneamino] imidazole-4-carboxamide isomerase from Actinobacillus pleuropneumoniae serotype 7 (strain AP76).